The primary structure comprises 892 residues: Microsomal triglyceride transfer protein homolog (892 aa).

An N-terminal signal peptide occupies residues 1–19; sequence MFSSRIWLLLAVTVGVCLA.

In terms of assembly, heterodimer; heterodimerizes with protein disulfide isomerase.

Its subcellular location is the endoplasmic reticulum. Its function is as follows. Catalyzes the transport of cholesteryl ester, and phospholipid between phospholipid surfaces. Does not catalyze transport of triglycerides. Required for the assembly and secretion of plasma lipoproteins that contain apolipoprotein B. Required for normal expression of klf-3. The polypeptide is Microsomal triglyceride transfer protein homolog (Caenorhabditis elegans).